The chain runs to 89 residues: MSLSAIDTKKIILKYGKSEQNSGITEVQVVLLTNQINYLQIHFSQHKKDHCSRRGLLNMVSKRRKLLDYLKKKNISRYSALIEDLHLRR.

This sequence belongs to the universal ribosomal protein uS15 family. In terms of assembly, part of the 30S ribosomal subunit. Forms a bridge to the 50S subunit in the 70S ribosome, contacting the 23S rRNA.

Functionally, one of the primary rRNA binding proteins, it binds directly to 16S rRNA where it helps nucleate assembly of the platform of the 30S subunit by binding and bridging several RNA helices of the 16S rRNA. Its function is as follows. Forms an intersubunit bridge (bridge B4) with the 23S rRNA of the 50S subunit in the ribosome. This chain is Small ribosomal subunit protein uS15, found in Buchnera aphidicola subsp. Acyrthosiphon pisum (strain 5A).